Reading from the N-terminus, the 319-residue chain is 2,3,4,5-tetrahydropyridine-2,6-dicarboxylate N-succinyltransferase (319 aa).

Asp-167 and Glu-184 together coordinate Mg(2+). The active-site Acyl-anhydride intermediate is the Glu-200. Succinyl-CoA-binding positions include Arg-202, Gly-217, Ser-220, Ala-243, 258–259 (EA), and Lys-278.

It belongs to the type 2 tetrahydrodipicolinate N-succinyltransferase family. Homotrimer.

The protein resides in the cytoplasm. It catalyses the reaction (S)-2,3,4,5-tetrahydrodipicolinate + succinyl-CoA + H2O = (S)-2-succinylamino-6-oxoheptanedioate + CoA. It participates in amino-acid biosynthesis; L-lysine biosynthesis via DAP pathway; LL-2,6-diaminopimelate from (S)-tetrahydrodipicolinate (succinylase route): step 1/3. In terms of biological role, catalyzes the conversion of the cyclic tetrahydrodipicolinate (THDP) into the acyclic N-succinyl-L-2-amino-6-oxopimelate using succinyl-CoA. The protein is 2,3,4,5-tetrahydropyridine-2,6-dicarboxylate N-succinyltransferase of Salinispora tropica (strain ATCC BAA-916 / DSM 44818 / JCM 13857 / NBRC 105044 / CNB-440).